A 636-amino-acid polypeptide reads, in one-letter code: Leucine-rich repeat and fibronectin type-III domain-containing protein 4 (636 aa).

The signal sequence occupies residues 1–16; sequence MAPPLLLLLLASGAAA. Residues 17–48 form the LRRNT domain; sequence CPLPCVCQNLSESLSTLCAHRGLLFVPPNVDR. Over 17–518 the chain is Extracellular; the sequence is CPLPCVCQNL…LQAHVLGGTL (502 aa). Asn-25 and Asn-70 each carry an N-linked (GlcNAc...) asparagine glycan. 7 LRR repeats span residues 49–70, 73–94, 97–118, 121–142, 146–169, 170–191, and 194–215; these read RTVE…DFRN, GLVD…SFGD, SLRS…SLRG, NLQH…AFDD, SLED…GSMP, ALHT…VFAQ, and QLSR…PLFS. The region spanning 234–280 is the LRRCT domain; it reads NPLHCNCELLWLRRLARPDDLETCASPPTLAGRYFWAVPEGEFSCEP. In terms of domain architecture, Ig-like spans 281 to 367; sequence PLIARHTQRL…GEATARVELR (87 aa). An intrachain disulfide couples Cys-302 to Cys-351. 4 N-linked (GlcNAc...) asparagine glycosylation sites follow: Asn-324, Asn-333, Asn-376, and Asn-440. One can recognise a Fibronectin type-III domain in the interval 405-502; it reads SEPAVQVTEV…GCAHFSTLPA (98 aa). A helical membrane pass occupies residues 519–539; it reads TVAVGGVLVAALLVFTVALLV. Residues 540 to 636 lie on the Cytoplasmic side of the membrane; the sequence is RGRGAGNGRL…SAERLEESVV (97 aa). Positions 556-585 are disordered; sequence VQSQTNGGTSPMPKSHPPRSPPPRPQRSCS. The span at 569 to 580 shows a compositional bias: pro residues; it reads KSHPPRSPPPRP. Phosphoserine is present on residues Ser-585 and Ser-627. The short motif at 633–636 is the PDZ-binding element; sequence ESVV.

Belongs to the LRFN family. Can form heteromeric complexes with LRFN1, LRFN2, LRFN3 and LRFN5. Unable to form homophilic interactions across cell junctions. Interacts with DLG1, DLG2 and DLG3. Also interacts with DLG4. Glycosylated. As to expression, expressed in brain and testis. In the brain, weak, but broad expression in the cerebral cortex and diencephalic nuclei. Also detected in other parts of the central nervous system, including the olfactory bulb, pons, cerebellum, and medulla oblongata, as well as in the peripheral nervous system, such as the ganglia of cranial nerves and the dorsal root ganglion during gestation.

It localises to the membrane. Promotes neurite outgrowth in hippocampal neurons. May play a role in redistributing DLG4 to the cell periphery. The sequence is that of Leucine-rich repeat and fibronectin type-III domain-containing protein 4 (Lrfn4) from Mus musculus (Mouse).